A 166-amino-acid polypeptide reads, in one-letter code: MAELTHLDERGQARMVDVAEKPETHRVAVARGRVSLRPETLQLVREGRAAKGDVLAVARVAGIMAAKRTAELIPLCHPLPLTKVEVDVRTNEQDTCLEIEARVETVSRTGVEMEALTAVAVAALTVYDMLKAVDRGMTIDRIQLIEKAGGRSGTWRREDDEARHAR.

Residues 75 to 77 (LCH) and 113 to 114 (ME) contribute to the substrate site. Asp128 is an active-site residue.

The protein belongs to the MoaC family. In terms of assembly, homohexamer; trimer of dimers.

It catalyses the reaction (8S)-3',8-cyclo-7,8-dihydroguanosine 5'-triphosphate = cyclic pyranopterin phosphate + diphosphate. Its pathway is cofactor biosynthesis; molybdopterin biosynthesis. In terms of biological role, catalyzes the conversion of (8S)-3',8-cyclo-7,8-dihydroguanosine 5'-triphosphate to cyclic pyranopterin monophosphate (cPMP). The sequence is that of Cyclic pyranopterin monophosphate synthase from Thermomicrobium roseum (strain ATCC 27502 / DSM 5159 / P-2).